We begin with the raw amino-acid sequence, 231 residues long: Small ribosomal subunit protein uS3 (231 aa).

In terms of domain architecture, KH type-2 spans 39–107 (IRELLHKELK…DVVINIVEIR (69 aa)).

It belongs to the universal ribosomal protein uS3 family. In terms of assembly, part of the 30S ribosomal subunit. Forms a tight complex with proteins S10 and S14.

In terms of biological role, binds the lower part of the 30S subunit head. Binds mRNA in the 70S ribosome, positioning it for translation. In Nitrobacter hamburgensis (strain DSM 10229 / NCIMB 13809 / X14), this protein is Small ribosomal subunit protein uS3.